The sequence spans 313 residues: uncharacterized protein (313 aa).

To B.subtilis YqxC and T.hyodysenteriae hemolysin TlyA.

This is an uncharacterized protein from Bacillus subtilis (strain 168).